The chain runs to 192 residues: MEYRSLTLDYFLSRFQLLRPQINRETLNHRQAAVLIPIVRRPQPGLLLTQRSIHLRKHAGQVAFPGGAVDDTDASVIAAALREAEEEVAIPPSAVEVIGVLPPVDSVTGYQVTPVVGIIPPDLPYRASEDEVSAVFEMPLAQALHLGRYHPLDIYRRGDSHRVWLSWYEQYFVWGMTAGIIRELALQIGVKP.

A Nudix hydrolase domain is found at 29-160 (HRQAAVLIPI…PLDIYRRGDS (132 aa)). A Nudix box motif is present at residues 67 to 89 (GAVDDTDASVIAAALREAEEEVA). Glu-83 and Glu-87 together coordinate Mg(2+).

Belongs to the Nudix hydrolase family. PCD1 subfamily. It depends on Mn(2+) as a cofactor. Mg(2+) serves as cofactor.

Functionally, probably mediates the hydrolysis of some nucleoside diphosphate derivatives. This is an uncharacterized protein from Escherichia coli O139:H28 (strain E24377A / ETEC).